Reading from the N-terminus, the 90-residue chain is Acylphosphatase (90 aa).

Residues glutamine 3–arginine 90 form the Acylphosphatase-like domain. Residues arginine 18 and asparagine 36 contribute to the active site.

This sequence belongs to the acylphosphatase family.

The catalysed reaction is an acyl phosphate + H2O = a carboxylate + phosphate + H(+). The polypeptide is Acylphosphatase (acyP) (Actinobacillus pleuropneumoniae serotype 5b (strain L20)).